The following is a 198-amino-acid chain: Imidazoleglycerol-phosphate dehydratase (198 aa).

The protein belongs to the imidazoleglycerol-phosphate dehydratase family.

The protein localises to the cytoplasm. The enzyme catalyses D-erythro-1-(imidazol-4-yl)glycerol 3-phosphate = 3-(imidazol-4-yl)-2-oxopropyl phosphate + H2O. It functions in the pathway amino-acid biosynthesis; L-histidine biosynthesis; L-histidine from 5-phospho-alpha-D-ribose 1-diphosphate: step 6/9. This chain is Imidazoleglycerol-phosphate dehydratase, found in Gluconacetobacter diazotrophicus (strain ATCC 49037 / DSM 5601 / CCUG 37298 / CIP 103539 / LMG 7603 / PAl5).